The following is a 471-amino-acid chain: tRNA-2-methylthio-N(6)-dimethylallyladenosine synthase (471 aa).

Positions 36–154 (KTYHIITYGC…FPQLLYKAIT (119 aa)) constitute an MTTase N-terminal domain. Residues C45, C81, C115, C191, C195, and C198 each coordinate [4Fe-4S] cluster. The Radical SAM core domain maps to 177–407 (RREGVSAFVN…VKLVEEIALK (231 aa)). Positions 410–471 (QQMLGKVCEI…SRHWLYGEVI (62 aa)) constitute a TRAM domain.

This sequence belongs to the methylthiotransferase family. MiaB subfamily. As to quaternary structure, monomer. [4Fe-4S] cluster is required as a cofactor.

Its subcellular location is the cytoplasm. It carries out the reaction N(6)-dimethylallyladenosine(37) in tRNA + (sulfur carrier)-SH + AH2 + 2 S-adenosyl-L-methionine = 2-methylsulfanyl-N(6)-dimethylallyladenosine(37) in tRNA + (sulfur carrier)-H + 5'-deoxyadenosine + L-methionine + A + S-adenosyl-L-homocysteine + 2 H(+). Catalyzes the methylthiolation of N6-(dimethylallyl)adenosine (i(6)A), leading to the formation of 2-methylthio-N6-(dimethylallyl)adenosine (ms(2)i(6)A) at position 37 in tRNAs that read codons beginning with uridine. The polypeptide is tRNA-2-methylthio-N(6)-dimethylallyladenosine synthase (Caldicellulosiruptor saccharolyticus (strain ATCC 43494 / DSM 8903 / Tp8T 6331)).